A 1221-amino-acid polypeptide reads, in one-letter code: DNA replication helicase (1221 aa).

The Nuclear localization signal signature appears at 692 to 701; it reads PKCKCYKKIK. 917–924 contributes to the ATP binding site; it reads GEPGSGKS. The H-T-H motif DNA-binding region spans 967–981; that stretch reads INELKQCSESYFKKH.

As to quaternary structure, interacts with IE1 and LEF-3.

It localises to the host nucleus. The catalysed reaction is ATP + H2O = ADP + phosphate + H(+). Its function is as follows. Essential for initiation of viral DNA replication, it may contribute to other functions such as controlling the switch to the late phase and leading to the inhibition of host protein synthesis. Required for late and very late gene expression. This is DNA replication helicase (HELI) from Lepidoptera (butterflies and moths).